We begin with the raw amino-acid sequence, 375 residues long: Methylthioribose-1-phosphate isomerase (375 aa).

Residues 53–55 (RGA), R90, and Q202 contribute to the substrate site. Catalysis depends on D243, which acts as the Proton donor. 253-254 (NK) is a substrate binding site.

The protein belongs to the eIF-2B alpha/beta/delta subunits family. MtnA subfamily.

The enzyme catalyses 5-(methylsulfanyl)-alpha-D-ribose 1-phosphate = 5-(methylsulfanyl)-D-ribulose 1-phosphate. The protein operates within amino-acid biosynthesis; L-methionine biosynthesis via salvage pathway; L-methionine from S-methyl-5-thio-alpha-D-ribose 1-phosphate: step 1/6. Functionally, catalyzes the interconversion of methylthioribose-1-phosphate (MTR-1-P) into methylthioribulose-1-phosphate (MTRu-1-P). This Rhodospirillum centenum (strain ATCC 51521 / SW) protein is Methylthioribose-1-phosphate isomerase.